The following is a 473-amino-acid chain: Eukaryotic translation initiation factor 2 subunit gamma (473 aa).

One can recognise a tr-type G domain in the interval 40-250 (QATINIGTIG…AICNIAPPNY (211 aa)). The tract at residues 49–56 (GHVAHGKS) is G1. 52-57 (AHGKSS) lines the GTP pocket. The tract at residues 77–81 (NITIK) is G2. Positions 135 to 138 (DCPG) are G3. GTP contacts are provided by residues 193–196 (NKMD) and 228–230 (SAQ). Residues 193–196 (NKMD) form a G4 region. The interval 228 to 230 (SAQ) is G5. The segment at 458 to 470 (GKVRSGGTLCEVV) is interacts with CDC123.

This sequence belongs to the TRAFAC class translation factor GTPase superfamily. Classic translation factor GTPase family. EIF2G subfamily. In terms of assembly, eukaryotic translation initiation factor 2 eIF2 is a heterotrimeric complex composed of an alpha, a beta and a gamma subunit. The factors eIF-1, eIF-2, eIF-3, TIF5/eIF-5 and methionyl-tRNAi form a multifactor complex (MFC) that may bind to the 40S ribosome.

Its subcellular location is the cytoplasm. It is found in the cytosol. The catalysed reaction is GTP + H2O = GDP + phosphate + H(+). Its function is as follows. As a subunit of eukaryotic initiation factor 2 eIF2, involved in the early steps of protein synthesis. In the presence of GTP, eIF-2 forms a ternary complex with initiator tRNA Met-tRNAi and then recruits the 40S ribosomal complex and initiation factors eIF-1, eIF-1A and eIF-3 to form the 43S pre-initiation complex (43S PIC), a step that determines the rate of protein translation. The 43S PIC binds to mRNA and scans downstream to the initiation codon, where it forms a 48S initiation complex by codon-anticodon base pairing. This leads to the displacement of eIF-1 to allow GTPase-activating protein (GAP) eIF-5-mediated hydrolysis of eIF2-bound GTP. Hydrolysis of GTP and release of Pi, which makes GTP hydrolysis irreversible, causes the release of the eIF-2-GDP binary complex from the 40S subunit, an event that is essential for the subsequent joining of the 60S ribosomal subunit to form an elongation-competent 80S ribosome. In order for eIF-2 to recycle and catalyze another round of initiation, the GDP bound to eIF-2 must be exchanged with GTP by way of a reaction catalyzed by GDP-GTP exchange factor (GEF) eIF-2B. The protein is Eukaryotic translation initiation factor 2 subunit gamma of Cryptococcus neoformans var. grubii serotype A (strain H99 / ATCC 208821 / CBS 10515 / FGSC 9487) (Filobasidiella neoformans var. grubii).